Here is a 1549-residue protein sequence, read N- to C-terminus: ATP-binding cassette sub-family C member 9 (1549 aa).

Over 1–30 (MSLSFCGNNISSYNINDGVLQNSCFVDALN) the chain is Extracellular. Residue asparagine 9 is glycosylated (N-linked (GlcNAc...) asparagine). Residues 31-51 (LVPHVFLLFITFPILFIGWGS) form a helical membrane-spanning segment. Residues 52 to 72 (QSSKVQIHHNTWLHFPGHNLR) are Cytoplasmic-facing. Residues 73–93 (WILTFALLFVHVCEIAEGIVS) form a helical membrane-spanning segment. The Extracellular segment spans residues 94–101 (DSRRESRH). A helical transmembrane segment spans residues 102-122 (LHLFMPAVMGFVATTTSIVYY). The Cytoplasmic segment spans residues 123-132 (HNIETSNFPK). A helical transmembrane segment spans residues 133-153 (LLLALFLYWVMAFITKTIKLV). Topologically, residues 154–167 (KYCQSGLDISNLRF) are extracellular. Residues 168–188 (CITGMMVILNGLLMAVEINVI) traverse the membrane as a helical segment. The Cytoplasmic segment spans residues 189 to 301 (RVRRYVFFMN…AFGRPILLSS (113 aa)). Residues 297 to 597 (ILLSSTFRYL…LSTVVRFAVK (301 aa)) enclose the ABC transmembrane type-1 1 domain. The chain crosses the membrane as a helical span at residues 302–322 (TFRYLADLLGFAGPLCISGIV). Over 323 to 350 (QRVNETQNGTNNTTGISETLSSKEFLEN) the chain is Extracellular. N-linked (GlcNAc...) asparagine glycans are attached at residues asparagine 326, asparagine 330, asparagine 333, and asparagine 334. The chain crosses the membrane as a helical span at residues 351-371 (AYVLAVLLFLALILQRTFLQA). The Cytoplasmic portion of the chain corresponds to 372 to 423 (SYYVTIETGINLRGALLAMIYNKILRLSTSNLSMGEMTLGQINNLVAIETNQ). The chain crosses the membrane as a helical span at residues 424–444 (LMWFLFLCPNLWAMPVQIIMG). Residues 445-455 (VILLYNLLGSS) are Extracellular-facing. A helical membrane pass occupies residues 456–476 (ALVGAAVIVLLAPIQYFIATK). At 477 to 531 (LAEAQKSTLDYSTERLKKTNEILKGIKLLKLYAWEHIFCKSVEETRMKELSSLKT) the chain is on the cytoplasmic side. A helical membrane pass occupies residues 532 to 552 (FALYTSLSIFMNAAIPIAAVL). Over 553 to 571 (ATFVTHAYASGNNLKPAEA) the chain is Extracellular. The helical transmembrane segment at 572–592 (FASLSLFHILVTPLFLLSTVV) threads the bilayer. Topologically, residues 593–990 (RFAVKAIISV…TCWRYLTSGG (398 aa)) are cytoplasmic. One can recognise an ABC transporter 1 domain in the interval 672–912 (IKVTNGYFSW…DVELYEHWKT (241 aa)). 705–712 (GQVGCGKS) serves as a coordination point for ATP. Positions 944-967 (REAKAQMEDEDEEEEEEEDEDDNM) are disordered. Residues 951–966 (EDEDEEEEEEEDEDDN) show a composition bias toward acidic residues. Residues 991–1011 (FFLLILMIFSKLLKHSVIVAI) form a helical membrane-spanning segment. The region spanning 994–1274 (LILMIFSKLL…VVRNLADLEV (281 aa)) is the ABC transmembrane type-1 2 domain. Residues 1012 to 1034 (DYWLATWTSEYSINNTGKADQTY) are Extracellular-facing. Residues 1035-1055 (YVAGFSILCGAGIFLCLVTSL) traverse the membrane as a helical segment. The Cytoplasmic segment spans residues 1056-1127 (TVEWMGLTAA…TLLCLSAIGM (72 aa)). The helical transmembrane segment at 1128-1148 (ISYATPVFLVALLPLGVAFYF) threads the bilayer. The Extracellular portion of the chain corresponds to 1149-1245 (IQKYFRVASK…IASISGSSNS (97 aa)). A helical transmembrane segment spans residues 1246-1266 (GLVGLGLLYALTITNYLNWVV). Over 1267–1549 (RNLADLEVQM…LFSTLVMTNK (283 aa)) the chain is Cytoplasmic. The 235-residue stretch at 1312–1546 (IKIHDLCVRY…KNGLFSTLVM (235 aa)) folds into the ABC transporter 2 domain. 1346–1353 (GRTGSGKS) contributes to the ATP binding site.

Belongs to the ABC transporter superfamily. ABCC family. Conjugate transporter (TC 3.A.1.208) subfamily. As to quaternary structure, interacts with KCNJ11. Interacts with KCNJ8.

It localises to the membrane. Functionally, subunit of ATP-sensitive potassium channels (KATP). Can form cardiac and smooth muscle-type KATP channels with KCNJ11. KCNJ11 forms the channel pore while ABCC9 is required for activation and regulation. Can form a sulfonylurea-sensitive but ATP-insensitive potassium channel with KCNJ8. This is ATP-binding cassette sub-family C member 9 (ABCC9) from Homo sapiens (Human).